Here is a 230-residue protein sequence, read N- to C-terminus: 3-beta-hydroxysteroid-Delta(8),Delta(7)-isomerase (230 aa).

Thr2 carries the post-translational modification N-acetylthreonine. A run of 4 helical transmembrane segments spans residues 29–49 (WHILAGLFSVTGVLVVTTWLL), 66–86 (LCWFAVCGFIHLVIEGWFVLY), 121–141 (METITACLWGPLSLWVVIAFL), and 185–205 (FWFYFVFMNALWLVLPGVLVL). Positions 61–204 (WRRLSLCWFA…LWLVLPGVLV (144 aa)) constitute an EXPERA domain.

It belongs to the EBP family.

The protein localises to the endoplasmic reticulum membrane. It localises to the nucleus envelope. Its subcellular location is the cytoplasmic vesicle. The enzyme catalyses lathosterol = 5alpha-cholest-8-en-3beta-ol. The catalysed reaction is zymosterol = 5alpha-cholesta-7,24-dien-3beta-ol. It catalyses the reaction 5,6alpha-epoxy-5alpha-cholestan-3beta-ol + H2O = 5alpha-cholestane-3beta,5,6beta-triol. It carries out the reaction 5,6beta-epoxy-5beta-cholestan-3beta-ol + H2O = 5alpha-cholestane-3beta,5,6beta-triol. It participates in steroid biosynthesis; cholesterol biosynthesis. Cholestenol Delta-isomerase and cholesterol-5,6-epoxide hydrolase (ChEH) activities are inhibited by tamoxifen and the selective AEBS ligand (4-benzyl-phenoxy)-ethyl-N-pyrrolidine (PBPE). ChEH activity is inhibited by oleic acid. Its function is as follows. Isomerase that catalyzes the conversion of Delta(8)-sterols to their corresponding Delta(7)-isomers a catalytic step in the postlanosterol biosynthesis of cholesterol. In terms of biological role, component of the microsomal antiestrogen binding site (AEBS), a multiproteic complex at the ER membrane that consists of an association between EBP and 7-dehydrocholesterol reductase/DHCR7. This complex is responsible for cholesterol-5,6-epoxide hydrolase (ChEH) activity, which consists in the hydration of cholesterol-5,6-epoxides (5,6-EC) into cholestane-3beta,5alpha,6beta-triol (CT). The precise role of each component of this complex has not been described yet. This chain is 3-beta-hydroxysteroid-Delta(8),Delta(7)-isomerase, found in Homo sapiens (Human).